We begin with the raw amino-acid sequence, 967 residues long: Alanine--tRNA ligase, cytoplasmic (967 aa).

Residues H605, H609, C724, and H728 each coordinate Zn(2+).

This sequence belongs to the class-II aminoacyl-tRNA synthetase family. In terms of assembly, monomer. It depends on Zn(2+) as a cofactor. In terms of processing, the N-terminus is blocked.

It localises to the cytoplasm. It catalyses the reaction tRNA(Ala) + L-alanine + ATP = L-alanyl-tRNA(Ala) + AMP + diphosphate. Functionally, catalyzes the attachment of alanine to tRNA(Ala) in a two-step reaction: alanine is first activated by ATP to form Ala-AMP and then transferred to the acceptor end of tRNA(Ala). Also edits incorrectly charged tRNA(Ala) via its editing domain. The chain is Alanine--tRNA ligase, cytoplasmic from Bombyx mori (Silk moth).